The primary structure comprises 151 residues: Small ribosomal subunit protein uS15 (151 aa).

Positions 1–20 are disordered; sequence MARLHSGKRGSSGSTRPLRT.

The protein belongs to the universal ribosomal protein uS15 family. Part of the 30S ribosomal subunit.

The polypeptide is Small ribosomal subunit protein uS15 (Methanococcus maripaludis (strain DSM 14266 / JCM 13030 / NBRC 101832 / S2 / LL)).